Reading from the N-terminus, the 167-residue chain is Mediator of RNA polymerase II transcription subunit 10 (167 aa).

The disordered stretch occupies residues 53–88; sequence LSTHTKPQPPSQDEEQKEKQDDTPEGSANDPLLRDI.

It belongs to the Mediator complex subunit 10 family. In terms of assembly, component of the Mediator complex.

It localises to the nucleus. In terms of biological role, component of the Mediator complex, a coactivator involved in the regulated transcription of nearly all RNA polymerase II-dependent genes. Mediator functions as a bridge to convey information from gene-specific regulatory proteins to the basal RNA polymerase II transcription machinery. Mediator is recruited to promoters by direct interactions with regulatory proteins and serves as a scaffold for the assembly of a functional preinitiation complex with RNA polymerase II and the general transcription factors. The polypeptide is Mediator of RNA polymerase II transcription subunit 10 (nut2) (Neosartorya fischeri (strain ATCC 1020 / DSM 3700 / CBS 544.65 / FGSC A1164 / JCM 1740 / NRRL 181 / WB 181) (Aspergillus fischerianus)).